The primary structure comprises 387 residues: TSC22 domain family protein 4 (387 aa).

Disordered regions lie at residues 1–85 (MSGG…GEPY) and 135–232 (ISTP…RRDG). Residues 31–51 (PVPPALAGPPPRLPNGDPNPD) show a composition bias toward pro residues. Phosphothreonine is present on Thr57. 2 positions are modified to phosphoserine: Ser62 and Ser165. The residue at position 183 (Thr183) is a Phosphothreonine. Phosphoserine occurs at positions 187, 189, and 219. A Phosphothreonine modification is found at Thr223. Phosphoserine occurs at positions 254, 258, and 271. Residues 336–357 (LKEQIRDLAERNAALEQENGLL) form a leucine-zipper region. Phosphoserine is present on Ser362. The disordered stretch occupies residues 368–387 (QLPSSGLPRLGPSAPNGPSI).

The protein belongs to the TSC-22/Dip/Bun family. As to quaternary structure, forms a homodimer or heterodimer. Forms a heterodimer with TSC22D1 isoforms 1 and 2. Interacts with NRBP1. In terms of tissue distribution, expressed in the liver (at protein level). Expressed in Purkinje cells and proliferating cerebellar granular neurons (at protein level). Expressed in the cortex, medulla and papilla of the kidney.

It is found in the nucleus. The protein resides in the cytoplasm. Its subcellular location is the cell projection. The protein localises to the dendrite. It localises to the synapse. Functionally, binds DNA and acts as a transcriptional repressor. Involved in the regulation of systematic glucose homeostasis and insulin sensitivity, via transcriptional repression of downstream insulin signaling targets such as OBP2A/LCN13. Acts as a negative regulator of lipogenic gene expression in hepatocytes and thereby mediates the control of very low-density lipoprotein release. May play a role in neurite elongation and survival. In Mus musculus (Mouse), this protein is TSC22 domain family protein 4.